The sequence spans 153 residues: Movement protein (153 aa).

Residues Ser107–Arg153 form a disordered region.

It belongs to the luteoviruses movement protein family.

Transports viral genome to neighboring plant cells directly through plasmosdesmata, without any budding. The movement protein allows efficient cell to cell propagation, by bypassing the host cell wall barrier. This is Movement protein from Avena byzantina (Oat).